We begin with the raw amino-acid sequence, 460 residues long: Cysteine--tRNA ligase (460 aa).

A Zn(2+)-binding site is contributed by cysteine 28. Positions 30–40 match the 'HIGH' region motif; that stretch reads MTVYDYCHLGH. Zn(2+)-binding residues include cysteine 209, histidine 234, and glutamate 238. The 'KMSKS' region motif lies at 266 to 270; that stretch reads KMSKS. Lysine 269 lines the ATP pocket.

Belongs to the class-I aminoacyl-tRNA synthetase family. In terms of assembly, monomer. Requires Zn(2+) as cofactor.

The protein localises to the cytoplasm. It catalyses the reaction tRNA(Cys) + L-cysteine + ATP = L-cysteinyl-tRNA(Cys) + AMP + diphosphate. The sequence is that of Cysteine--tRNA ligase from Pseudomonas syringae pv. syringae (strain B728a).